The following is a 98-amino-acid chain: NADH-ubiquinone oxidoreductase chain 4L (98 aa).

3 consecutive transmembrane segments (helical) span residues 1–21 (MVLI…GVLI), 36–56 (MMLS…MFSI), and 61–81 (LILL…LVSI).

Belongs to the complex I subunit 4L family.

The protein resides in the mitochondrion membrane. The enzyme catalyses a ubiquinone + NADH + 5 H(+)(in) = a ubiquinol + NAD(+) + 4 H(+)(out). In terms of biological role, core subunit of the mitochondrial membrane respiratory chain NADH dehydrogenase (Complex I) which catalyzes electron transfer from NADH through the respiratory chain, using ubiquinone as an electron acceptor. Part of the enzyme membrane arm which is embedded in the lipid bilayer and involved in proton translocation. The chain is NADH-ubiquinone oxidoreductase chain 4L (MT-ND4L) from Didelphis virginiana (North American opossum).